Consider the following 338-residue polypeptide: D-erythrose-4-phosphate dehydrogenase (338 aa).

Position 12 to 13 (R12 to I13) interacts with NAD(+). Substrate contacts are provided by residues S154–T156, R200, T213–K214, and R236. Catalysis depends on C155, which acts as the Nucleophile. An NAD(+)-binding site is contributed by N318.

Belongs to the glyceraldehyde-3-phosphate dehydrogenase family. Epd subfamily. As to quaternary structure, homotetramer.

The protein localises to the cytoplasm. The catalysed reaction is D-erythrose 4-phosphate + NAD(+) + H2O = 4-phospho-D-erythronate + NADH + 2 H(+). The protein operates within cofactor biosynthesis; pyridoxine 5'-phosphate biosynthesis; pyridoxine 5'-phosphate from D-erythrose 4-phosphate: step 1/5. Functionally, catalyzes the NAD-dependent conversion of D-erythrose 4-phosphate to 4-phosphoerythronate. This Pectobacterium carotovorum subsp. carotovorum (strain PC1) protein is D-erythrose-4-phosphate dehydrogenase.